We begin with the raw amino-acid sequence, 127 residues long: Large ribosomal subunit protein eL24 (127 aa).

A disordered region spans residues 93–127 (KRAQKPEVKQAAAEQAKREIKEKKKAAAKKAAPKK). Over residues 115 to 127 (KKKAAAKKAAPKK) the composition is skewed to basic residues.

This sequence belongs to the eukaryotic ribosomal protein eL24 family.

This is Large ribosomal subunit protein eL24 (rpl24) from Dictyostelium discoideum (Social amoeba).